We begin with the raw amino-acid sequence, 975 residues long: Exocyst complex component 4 (975 aa).

Alanine 2 carries the N-acetylalanine modification. The residue at position 9 (lysine 9) is an N6-acetyllysine. Phosphoserine is present on serine 32. Residues 32-114 (STSDDVEDRE…HCKRDELRKL (83 aa)) are a coiled coil. Positions 211–224 (RNKEKGKMSSHGKD) are enriched in basic and acidic residues. A disordered region spans residues 211 to 230 (RNKEKGKMSSHGKDPSPGPL). Serine 226 is modified (phosphoserine). A Phosphothreonine modification is found at threonine 238. Position 469 is a phosphoserine (serine 469).

Belongs to the SEC8 family. In terms of assembly, the exocyst complex is composed of EXOC1, EXOC2, EXOC3, EXOC4, EXOC5, EXOC6, EXOC7 and EXOC8. Interacts with BIRC6/bruce. Interacts with MYRIP. Interacts with SH3BP1; required for the localization of both SH3BP1 and the exocyst to the leading edge of migrating cells. Interacts with SLC6A9. Expressed in the striatum (at protein level).

The protein resides in the midbody. It localises to the midbody ring. The protein localises to the cell projection. Its subcellular location is the cytoplasm. It is found in the cytoskeleton. The protein resides in the microtubule organizing center. It localises to the centrosome. Functionally, component of the exocyst complex involved in the docking of exocytic vesicles with fusion sites on the plasma membrane. In Mus musculus (Mouse), this protein is Exocyst complex component 4 (Exoc4).